The primary structure comprises 240 residues: Large ribosomal subunit protein uL2 (240 aa).

Polar residues predominate over residues 1 to 20; sequence MGKRLQSQNRGKGTPRYTSP. Disordered stretches follow at residues 1-33 and 204-240; these read MGKR…YRKF and PFGG…TGKR. Basic residues-rich tracts occupy residues 21-30 and 224-240; these read THKRKGAVKY and SPGR…TGKR.

The protein belongs to the universal ribosomal protein uL2 family. As to quaternary structure, part of the 50S ribosomal subunit. Forms a bridge to the 30S subunit in the 70S ribosome.

One of the primary rRNA binding proteins. Required for association of the 30S and 50S subunits to form the 70S ribosome, for tRNA binding and peptide bond formation. It has been suggested to have peptidyltransferase activity; this is somewhat controversial. Makes several contacts with the 16S rRNA in the 70S ribosome. The protein is Large ribosomal subunit protein uL2 of Methanococcus aeolicus (strain ATCC BAA-1280 / DSM 17508 / OCM 812 / Nankai-3).